A 223-amino-acid chain; its full sequence is Uracil-DNA glycosylase (223 aa).

Catalysis depends on D64, which acts as the Proton acceptor.

Belongs to the uracil-DNA glycosylase (UDG) superfamily. UNG family.

Its subcellular location is the cytoplasm. The enzyme catalyses Hydrolyzes single-stranded DNA or mismatched double-stranded DNA and polynucleotides, releasing free uracil.. In terms of biological role, excises uracil residues from the DNA which can arise as a result of misincorporation of dUMP residues by DNA polymerase or due to deamination of cytosine. The protein is Uracil-DNA glycosylase of Desulfitobacterium hafniense (strain DSM 10664 / DCB-2).